The chain runs to 213 residues: Probable thymidylate kinase 2 (213 aa).

10–17 (GIDGSGKS) lines the ATP pocket.

It belongs to the thymidylate kinase family.

It catalyses the reaction dTMP + ATP = dTDP + ADP. The protein is Probable thymidylate kinase 2 (tmk2) of Saccharolobus solfataricus (strain ATCC 35092 / DSM 1617 / JCM 11322 / P2) (Sulfolobus solfataricus).